Reading from the N-terminus, the 143-residue chain is Large-conductance mechanosensitive channel (143 aa).

The next 2 membrane-spanning stretches (helical) occupy residues 19 to 39 and 81 to 101; these read VGVI…ADVI and GSFL…FLVV.

The protein belongs to the MscL family. In terms of assembly, homopentamer.

The protein localises to the cell inner membrane. Functionally, channel that opens in response to stretch forces in the membrane lipid bilayer. May participate in the regulation of osmotic pressure changes within the cell. This Rhodopseudomonas palustris (strain HaA2) protein is Large-conductance mechanosensitive channel.